Here is a 387-residue protein sequence, read N- to C-terminus: Small ribosomal subunit biogenesis GTPase RsgA (387 aa).

In terms of domain architecture, CP-type G spans 112-273 (YDGLKPVAAN…LIDSPGVREF (162 aa)). GTP-binding positions include 159–162 (NKID) and 213–221 (GQSGVGKSS). Cysteine 297, cysteine 302, histidine 304, and cysteine 310 together coordinate Zn(2+).

This sequence belongs to the TRAFAC class YlqF/YawG GTPase family. RsgA subfamily. Monomer. Associates with 30S ribosomal subunit, binds 16S rRNA. It depends on Zn(2+) as a cofactor.

The protein localises to the cytoplasm. One of several proteins that assist in the late maturation steps of the functional core of the 30S ribosomal subunit. Helps release RbfA from mature subunits. May play a role in the assembly of ribosomal proteins into the subunit. Circularly permuted GTPase that catalyzes slow GTP hydrolysis, GTPase activity is stimulated by the 30S ribosomal subunit. The chain is Small ribosomal subunit biogenesis GTPase RsgA from Vibrio cholerae serotype O1 (strain ATCC 39315 / El Tor Inaba N16961).